Here is a 222-residue protein sequence, read N- to C-terminus: Protein ORM1 (222 aa).

Residues 1–57 are disordered; it reads MTELDYQGTAEAASTSYSRNQTDLKPFPSAGSASSSIKTTEPVKDHRRRRSSSIISH. Residues 1 to 85 lie on the Cytoplasmic side of the membrane; sequence MTELDYQGTA…NATWVDQRGA (85 aa). Over residues 12–23 the composition is skewed to polar residues; the sequence is AASTSYSRNQTD. 3 positions are modified to phosphoserine: serine 29, serine 32, and serine 56. A helical membrane pass occupies residues 86–106; sequence WIIHVVIIILLKLFYNLFPGV. The Extracellular segment spans residues 107–109; sequence TTE. Residues 110-130 form a helical membrane-spanning segment; sequence WSWTLTNMTYVIGSYVMFHLI. Over 131 to 162 the chain is Cytoplasmic; it reads KGTPFDFNGGAYDNLTMWEQIDDETLYTPSRK. A helical transmembrane segment spans residues 163–183; sequence FLISVPIALFLVSTHYAHYDL. Residue lysine 184 is a topological domain, extracellular. Residues 185–205 traverse the membrane as a helical segment; it reads LFSWNCFLTTFGAVVPKLPVT. Residues 206–222 are Cytoplasmic-facing; that stretch reads HRLRISIPGITGRAQIS.

It belongs to the ORM family. Component of the SPOTS complex, at least composed of LCB1/2 (LCB1 and/or LCB2), ORM1/2 (ORM1 and/or ORM2), SAC1 and TSC3. Post-translationally, phosphorylated in case of disruption of sphingolipid synthesis. Phosphorylation regulates inhibitory activity of serine palmitoyltransferases (LCB1 and LCB2).

Its subcellular location is the endoplasmic reticulum membrane. Functionally, component of the SPOTS complex that acts as a negative regulator of sphingolipid synthesis. Acts by inhibiting serine palmitoyltransferases (LCB1 and LCB2) activity. Along with ORM2, plays a role in the phosphorylation of LAC1 and YPK1, the distribution of actin patches between mother and daughter cells, and in endocytosis. Disruption or inhibition of sphingolipid synthesis leads to the activation and phosphorylation of YPK1 through the TORC2 and PKH1 pathways, which in turn phosphorylates ORM1 and LAG1 to activate sphingolipid synthesis. This chain is Protein ORM1 (ORM1), found in Saccharomyces cerevisiae (strain ATCC 204508 / S288c) (Baker's yeast).